Here is a 197-residue protein sequence, read N- to C-terminus: Peptide deformylase (197 aa).

Positions 106 and 148 each coordinate Fe cation. Glutamate 149 is a catalytic residue. Histidine 152 provides a ligand contact to Fe cation.

Belongs to the polypeptide deformylase family. It depends on Fe(2+) as a cofactor.

The enzyme catalyses N-terminal N-formyl-L-methionyl-[peptide] + H2O = N-terminal L-methionyl-[peptide] + formate. Functionally, removes the formyl group from the N-terminal Met of newly synthesized proteins. Requires at least a dipeptide for an efficient rate of reaction. N-terminal L-methionine is a prerequisite for activity but the enzyme has broad specificity at other positions. In Mycobacteroides abscessus (strain ATCC 19977 / DSM 44196 / CCUG 20993 / CIP 104536 / JCM 13569 / NCTC 13031 / TMC 1543 / L948) (Mycobacterium abscessus), this protein is Peptide deformylase.